Reading from the N-terminus, the 81-residue chain is RNA-binding protein Hfq (81 aa).

In terms of domain architecture, Sm spans 9–68 (DPYLNILRKERVPVSIFLVNGIKLQGQIESFDQFVILLKNTVSQMVYKHAISTVVPSRTI).

It belongs to the Hfq family. Homohexamer.

Its function is as follows. RNA chaperone that binds small regulatory RNA (sRNAs) and mRNAs to facilitate mRNA translational regulation in response to envelope stress, environmental stress and changes in metabolite concentrations. Also binds with high specificity to tRNAs. The polypeptide is RNA-binding protein Hfq (Marinomonas sp. (strain MWYL1)).